A 517-amino-acid chain; its full sequence is Bifunctional purine biosynthesis protein PurH (517 aa).

In terms of domain architecture, MGS-like spans 1–146; the sequence is MKRLALLSTS…KNFAHLTVLC (146 aa).

It belongs to the PurH family.

It carries out the reaction (6R)-10-formyltetrahydrofolate + 5-amino-1-(5-phospho-beta-D-ribosyl)imidazole-4-carboxamide = 5-formamido-1-(5-phospho-D-ribosyl)imidazole-4-carboxamide + (6S)-5,6,7,8-tetrahydrofolate. The catalysed reaction is IMP + H2O = 5-formamido-1-(5-phospho-D-ribosyl)imidazole-4-carboxamide. The protein operates within purine metabolism; IMP biosynthesis via de novo pathway; 5-formamido-1-(5-phospho-D-ribosyl)imidazole-4-carboxamide from 5-amino-1-(5-phospho-D-ribosyl)imidazole-4-carboxamide (10-formyl THF route): step 1/1. It participates in purine metabolism; IMP biosynthesis via de novo pathway; IMP from 5-formamido-1-(5-phospho-D-ribosyl)imidazole-4-carboxamide: step 1/1. The chain is Bifunctional purine biosynthesis protein PurH from Trichodesmium erythraeum (strain IMS101).